We begin with the raw amino-acid sequence, 453 residues long: Plasmepsin II (453 aa).

The Cytoplasmic portion of the chain corresponds to 1 to 37; that stretch reads MDITVREHDFKHGFIKSNSTFDGLNIDNSKNKKKIQK. Positions 1–124 are excised as a propeptide; that stretch reads MDITVREHDF…SGLTKTNYLG (124 aa). The helical; Signal-anchor for type II membrane protein transmembrane segment at 38 to 58 threads the bilayer; it reads GFQILYVLLFCSVMCGLFYYV. Over 59–453 the chain is Lumenal; sequence YENVWLQRDN…VGIALAKKNL (395 aa). Residues 140 to 447 enclose the Peptidase A1 domain; it reads FYGDAEVGDN…DYDNQSVGIA (308 aa). D158 is an active-site residue. A disulfide bond links C171 and C176. D338 is a catalytic residue. A disulfide bridge links C373 with C409.

This sequence belongs to the peptidase A1 family. In terms of assembly, component of the hemozoin formation complex (HFC) composed of falcipains FP2A and/or FP2B, plasmepsins PMII, PMIII/HAP and PMIV, heme detoxifying protein HDP and falcilysin FLN. The HFC complex is involved in hemoglobin degradation and detoxification of heme in the food vacuole during the asexual blood stage. Not N-glycosylated. Post-translationally, proteolytically cleaved into the soluble active mature form in the digestive vacuole by cysteine protease falcipains; the process begins at the early ring stage. Proteolysis requires an acidic environment. In absence of falcipains, autoprocessing may serve as an alternate activation system.

It is found in the membrane. The protein resides in the vacuole lumen. Its subcellular location is the vacuole membrane. It catalyses the reaction Hydrolysis of the bonds linking certain hydrophobic residues in hemoglobin or globin. Also cleaves small molecules substrates such as Ala-Leu-Glu-Arg-Thr-Phe-|-Phe(NO2)-Ser-Phe-Pro-Thr.. With respect to regulation, inhibited by pepstatin A. Inhibited by KNI derived compounds (KNI-10742, 10743, 10395, 10333, and 10343). Its function is as follows. During the asexual blood stage, participates in initial cleavage of native host hemoglobin (Hb) resulting in Hb denaturation. May cleave preferentially denatured hemoglobin that has been cleaved by PMI. Digestion of host Hb is an essential step which provides the parasite with amino acids for protein synthesis, and regulates osmolarity. The protein is Plasmepsin II of Plasmodium falciparum (isolate 3D7).